The sequence spans 160 residues: Cytochrome b6-f complex subunit 4 (160 aa).

4 consecutive transmembrane segments (helical) span residues 36–56 (LLYI…GLAV), 68–88 (PFAT…FQIL), 95–115 (FFGV…PFLE), and 131–151 (SVFL…VLPI).

This sequence belongs to the cytochrome b family. PetD subfamily. In terms of assembly, the 4 large subunits of the cytochrome b6-f complex are cytochrome b6, subunit IV (17 kDa polypeptide, petD), cytochrome f and the Rieske protein, while the 4 small subunits are petG, petL, petM and petN. The complex functions as a dimer.

Its subcellular location is the plastid. It is found in the chloroplast thylakoid membrane. Its function is as follows. Component of the cytochrome b6-f complex, which mediates electron transfer between photosystem II (PSII) and photosystem I (PSI), cyclic electron flow around PSI, and state transitions. The polypeptide is Cytochrome b6-f complex subunit 4 (Welwitschia mirabilis (Tree tumbo)).